The chain runs to 355 residues: G protein alpha i subunit (355 aa).

Gly-2 carries the N-myristoyl glycine lipid modification. Cys-3 carries S-palmitoyl cysteine lipidation. The G-alpha domain maps to 33–355; it reads SEVKLLLLGA…KNNLKQIGLF (323 aa). Residues 36 to 49 are G1 motif; that stretch reads KLLLLGAGESGKST. Residues 41–48, 176–182, 201–205, 270–273, and Ala-327 each bind GTP; these read GAGESGKS, LRTRVKT, DVGGQ, and NKKD. Positions 48 and 182 each coordinate Mg(2+). The G2 motif stretch occupies residues 174–182; sequence DVLRTRVKT. The interval 197-206 is G3 motif; sequence FKLFDVGGQR. Positions 266–273 are G4 motif; the sequence is ILFLNKKD. The G5 motif stretch occupies residues 325–330; sequence TCATDT.

Belongs to the G-alpha family. G(i/o/t/z) subfamily. G proteins are composed of 3 units; alpha, beta and gamma. The alpha chain contains the guanine nucleotide binding site. Interacts (via GDP- or GTP-bound forms) with loco (via GoLoco and RGS domains). Interacts with raps/pins.

The protein resides in the cell membrane. The protein localises to the apical cell membrane. Functionally, guanine nucleotide-binding proteins (G proteins) are involved as modulators or transducers in various transmembrane signaling systems. Plays a role in glial cell differentiation during embryogenesis; loco, Galphao and the G-protein coupled receptor, moody, are required in the surface glia to achieve effective insulation of the nerve cord. The chain is G protein alpha i subunit (Galphai) from Drosophila melanogaster (Fruit fly).